Reading from the N-terminus, the 358-residue chain is Histidinol-phosphate aminotransferase (358 aa).

Lysine 221 carries the N6-(pyridoxal phosphate)lysine modification.

The protein belongs to the class-II pyridoxal-phosphate-dependent aminotransferase family. Histidinol-phosphate aminotransferase subfamily. As to quaternary structure, homodimer. Pyridoxal 5'-phosphate serves as cofactor.

The catalysed reaction is L-histidinol phosphate + 2-oxoglutarate = 3-(imidazol-4-yl)-2-oxopropyl phosphate + L-glutamate. The protein operates within amino-acid biosynthesis; L-histidine biosynthesis; L-histidine from 5-phospho-alpha-D-ribose 1-diphosphate: step 7/9. The polypeptide is Histidinol-phosphate aminotransferase (Caldicellulosiruptor saccharolyticus (strain ATCC 43494 / DSM 8903 / Tp8T 6331)).